A 732-amino-acid chain; its full sequence is Acylamino-acid-releasing enzyme (732 aa).

An N-acetylmethionine modification is found at methionine 1. A phosphoserine mark is found at serine 185 and serine 187. Catalysis depends on charge relay system residues serine 587, aspartate 675, and histidine 707.

This sequence belongs to the peptidase S9C family. In terms of assembly, homotetramer.

It is found in the cytoplasm. It catalyses the reaction Cleavage of an N-acetyl or N-formyl amino acid from the N-terminus of a polypeptide.. With respect to regulation, homotetramerization is required for activity. Tetramerization results in the formation of a gated channel which is involved in substrate selection and substrate access to the catalytic sites. Its function is as follows. This enzyme catalyzes the hydrolysis of the N-terminal peptide bond of an N-acetylated peptide to generate an N-acetylated amino acid and a peptide with a free N-terminus. It preferentially cleaves off Ac-Ala, Ac-Met and Ac-Ser. Also, involved in the degradation of oxidized and glycated proteins. This is Acylamino-acid-releasing enzyme (Apeh) from Mus musculus (Mouse).